The following is a 35-amino-acid chain: Turgencin-B (35 aa).

2 positions are modified to methionine sulfoxide: M5 and M9. Disulfide bonds link C7-C31, C11-C27, and C16-C24. A Glycine amide modification is found at G35.

Oxidation likely reduces antimicrobial activity against Gram-positive bacteria and Gram-negative bacteria.

Its subcellular location is the secreted. In terms of biological role, has antimicrobial activity against Gram-positive bacteria (C.glutamicum ATCC 13032 (MIC=1.6 uM) and B.subtilis ATCC 23857 (MIC=1.6 uM)) and Gram-negative bacteria (E.coli ATCC 25922 (MIC=12.5 uM) and P.aeruginosa ATCC 27853 (MIC=25.0 uM)). Displays very low activity against the Gram-positive bacteria S.aureus ATCC 9144 (MIC&gt;100 uM). This chain is Turgencin-B, found in Synoicum turgens (Colonial ascidian).